A 999-amino-acid polypeptide reads, in one-letter code: Desmoglein-3 (999 aa).

A signal peptide spans 1–23 (MMGLFPRTTGALAIFVVVILVHG). Positions 24–49 (ELRIETKGQYDEEEMTMQQAKRRQKR) are excised as a propeptide. 4 consecutive Cadherin domains span residues 50-158 (EWVK…PVFS), 159-268 (QQIF…PMFR), 269-383 (DSQY…GIAF), and 386-499 (ASKT…VLEK). The Extracellular portion of the chain corresponds to 50–615 (EWVKFAKPCR…TRYGRPHSGR (566 aa)). Asparagine 110 and asparagine 180 each carry an N-linked (GlcNAc...) asparagine glycan. Residues asparagine 459 and asparagine 545 are each glycosylated (N-linked (GlcNAc...) asparagine). The helical transmembrane segment at 616–640 (LGPAAIGLLLLGLLLLLLAPLLLLT) threads the bilayer. The Cytoplasmic segment spans residues 641–999 (CDCGAGSTGG…CTEDPCSRLI (359 aa)). Positions 642 to 714 (DCGAGSTGGV…NTYARGTAVE (73 aa)) are required for interaction with CTNND1 and localization at cell-cell junctions. 2 Desmoglein repeat repeats span residues 910 to 935 (LSTS…LVTE) and 936 to 966 (TYSA…ERVI).

As to quaternary structure, homodimer. Part of a complex that contains DSG3, PKP1, YAP1 and YWHAG; the complex is required for localization of DSG3 and YAP1 to the cell membrane in keratinocytes. Interacts with PKP2. Interacts with CTNND1; the interaction facilitates DSG3 localization and retention at cell-cell junctions. Interacts with CDH1; the interaction is required for CDH1 localization to developing adherens junctions. Interacts with RAC1; the interaction is required for DSG3 translocation to cell-cell junctions, organization of cortical F-actin bundles and actin anchoring at cell-cell junctions. Interacts with DSC3; the interaction may limit the interaction of DSC3 with p38MAPK family members and therefore repress p38MAPK signaling activation. As to expression, expressed throughout the basal and spinous layer of the epidermis with weak expression in the granular layer (at protein level). Expressed in skin and mucosa (at protein level). Expressed in the basal layer of the outer root sheath of the telogen hair club, specifically at the cell membrane between the apex of the cells and the surrounding hair club (at protein level). Expression is less abundant between the lateral margins of the outer root sheath basal cells (at protein level). Also expressed in the tongue, tonsil and esophagus.

It localises to the cell membrane. It is found in the cell junction. The protein localises to the desmosome. Its subcellular location is the cytoplasm. The protein resides in the tight junction. Its function is as follows. A component of desmosome cell-cell junctions which are required for positive regulation of cellular adhesion. Required for adherens and desmosome junction assembly in response to mechanical force in keratinocytes. Required for desmosome-mediated cell-cell adhesion of cells surrounding the telogen hair club and the basal layer of the outer root sheath epithelium, consequently is essential for the anchoring of telogen hairs in the hair follicle. Required for the maintenance of the epithelial barrier via promoting desmosome-mediated intercellular attachment of suprabasal epithelium to basal cells. May play a role in the protein stability of the desmosome plaque components DSP, JUP, PKP1, PKP2 and PKP3. Required for YAP1 localization at the plasma membrane in keratinocytes in response to mechanical strain, via the formation of an interaction complex composed of DSG3, PKP1 and YWHAG. May also be involved in the positive regulation of YAP1 target gene transcription and as a result cell proliferation. Positively regulates cellular contractility and cell junction formation via organization of cortical F-actin bundles and anchoring of actin to tight junctions, in conjunction with RAC1. The cytoplasmic pool of DSG3 is required for the localization of CDH1 and CTNNB1 at developing adherens junctions, potentially via modulation of SRC activity. Inhibits keratinocyte migration via suppression of p38MAPK signaling, may therefore play a role in moderating wound healing. The sequence is that of Desmoglein-3 from Homo sapiens (Human).